A 580-amino-acid polypeptide reads, in one-letter code: Mucolipin-1 (580 aa).

Positions 1 to 38 (MATPAGRRASETERLLTPNPGYGTQVGTSPAPTTPTEE) are disordered. The Cytoplasmic segment spans residues 1 to 65 (MATPAGRRAS…FRAKGRKPCK (65 aa)). The residue at position 10 (S10) is a Phosphoserine. The short motif at 11–16 (ETERLL) is the Dileucine motif; mediates targeting to lysosomes element. The segment at 42-62 (RRRLKYFFMSPCDKFRAKGRK) is interaction with phosphoinositides. A helical membrane pass occupies residues 66–86 (LMLQVVKILVVTVQLILFGLS). Topologically, residues 87 to 298 (NQLVVTFREE…VSRHGDNSFR (212 aa)) are extracellular. Residues 107–121 (LGYSDGSDDTFAAYT) form an extracellular/lumenal pore loop region. A disulfide bridge connects residues C166 and C192. N220 and N230 each carry an N-linked (GlcNAc...) asparagine glycan. An intrachain disulfide couples C253 to C284. A helical transmembrane segment spans residues 299-321 (LLFDVVVILTCSLSFLLCARSLL). Over 322 to 350 (RGFLLQNEFVVFMWRRRGREISLWERLEF) the chain is Cytoplasmic. Residues 351–371 (VNGWYILLVTSDVLTISGTVM) form a helical membrane-spanning segment. Over 372–382 (KIGIEAKNLAS) the chain is Extracellular. The helical transmembrane segment at 383 to 405 (YDVCSILLGTSTLLVWVGVIRYL) threads the bilayer. At 406-427 (TFFHKYNILIATLRVALPSVMR) the chain is on the cytoplasmic side. Residues 428–448 (FCCCVAVIYLGYCFCGWIVLG) traverse the membrane as a helical segment. Residues 449–456 (PYHVKFRS) are Extracellular-facing. The segment at residues 457–477 (LSMVSECLFSLINGDDMFVTF) is an intramembrane region (pore-forming). Positions 469-474 (NGDDMF) match the Selectivity filter motif. Over 478–491 (AAMQAQQGHSSLVW) the chain is Extracellular. Residues 492 to 513 (LFSQLYLYSFISLFIYMVLSLF) form a helical membrane-spanning segment. Topologically, residues 514 to 580 (IALITGAYDT…SPEDHSLLVN (67 aa)) are cytoplasmic. S557 is modified (phosphoserine). At S559 the chain carries Phosphoserine; by PAK. The segment at 565–567 (CCC) is required for palmitoylation and association with membranes. Positions 573 to 578 (EDHSLL) match the Dileucine internalization motif; mediates AP2 complex-dependent internalization motif.

This sequence belongs to the transient receptor (TC 1.A.4) family. Polycystin subfamily. MCOLN1 sub-subfamily. As to quaternary structure, homotetramer. Homooligomer. Can heterooligomerize with MCOLN2 or MCOLN3; heteromeric assemblies have different channel properties as compared to the respective homooligomers and may be tissue-specific. Interacts with PDCD6. Interacts with TMEM163. Interacts with LAPTM4B. Palmitoylated; involved in association with membranes. Post-translationally, phosphorylation by PKA inhibits channel activity. Dephosphorylation increases activity. In terms of processing, proteolytically cleaved probably involving multiple lysosomal proteases including cathepsin B; inhibits lysosomal channel activity. In terms of tissue distribution, widely expressed, with the highest expression in brain, liver and kidney.

The protein resides in the late endosome membrane. The protein localises to the lysosome membrane. It is found in the cytoplasmic vesicle membrane. Its subcellular location is the cell projection. It localises to the phagocytic cup. The protein resides in the cytoplasmic vesicle. The protein localises to the phagosome membrane. It is found in the cell membrane. The enzyme catalyses Ca(2+)(in) = Ca(2+)(out). It catalyses the reaction Fe(2+)(in) = Fe(2+)(out). The catalysed reaction is Mg(2+)(in) = Mg(2+)(out). It carries out the reaction K(+)(in) = K(+)(out). The enzyme catalyses Na(+)(in) = Na(+)(out). With respect to regulation, channel activity is controlled by multiple regulatory mechanisms in different subcellular compartments. Lower pH by itself has an inhibitory effect on channel conductance. Channel function is transiently modulated by changes in Ca(2+) in a pH-dependent manner; pH changes modify the aggregation state of unitary channels; a negative cooperativity between extracellular/lumenal Ca(2+) and H(+) is suggested. Fe(2+) channel activity is potentiated by low pH. Regulated by phosphoinositides in a compartment-specific manner: in lysosomes activated by PtdIns(3,5)P2 (Phosphatidylinositol 3,5-bisphosphate) and at the plasma membrane inhibited by PtdIns(4,5)P2 (Phosphatidylinositol 4,5-bisphosphate). In terms of biological role, nonselective cation channel probably playing a role in the regulation of membrane trafficking events and of metal homeostasis. Acts as a Ca(2+)-permeable cation channel with inwardly rectifying activity. Proposed to play a major role in Ca(2+) release from late endosome and lysosome vesicles to the cytoplasm, which is important for many lysosome-dependent cellular events, including the fusion and trafficking of these organelles, exocytosis and autophagy. Required for efficient uptake of large particles in macrophages in which Ca(2+) release from the lysosomes triggers lysosomal exocytosis. May also play a role in phagosome-lysosome fusion. Involved in lactosylceramide trafficking indicative for a role in the regulation of late endocytic membrane fusion/fission events. By mediating lysosomal Ca(2+) release is involved in regulation of mTORC1 signaling and in mTOR/TFEB-dependent lysosomal adaptation to environmental cues such as nutrient levels. Seems to act as lysosomal active oxygen species (ROS) sensor involved in ROS-induced TFEB activation and autophagy. Also functions as a Fe(2+) permeable channel in late endosomes and lysosomes. Also permeable to Mg(2+), Na(+). K(+) and Cs(+). Proposed to play a role in zinc homeostasis probably implicating its association with TMEM163. In adaptive immunity, TRPML2 and TRPML1 may play redundant roles in the function of the specialized lysosomes of B cells. Functionally, may contribute to cellular lipase activity within the late endosomal pathway or at the cell surface which may be involved in processes of membrane reshaping and vesiculation, especially the growth of tubular structures. However, it is not known, whether it conveys the enzymatic activity directly, or merely facilitates the activity of an associated phospholipase. The polypeptide is Mucolipin-1 (Mus musculus (Mouse)).